Here is a 219-residue protein sequence, read N- to C-terminus: Flagellar transcriptional regulator FlhC (219 aa).

Zn(2+)-binding residues include cysteine 137, cysteine 140, cysteine 157, and cysteine 160.

It belongs to the FlhC family. As to quaternary structure, heterohexamer composed of two FlhC and four FlhD subunits. Each FlhC binds a FlhD dimer, forming a heterotrimer, and a hexamer assembles by dimerization of two heterotrimers. Requires Zn(2+) as cofactor.

It is found in the cytoplasm. In terms of biological role, functions in complex with FlhD as a master transcriptional regulator that regulates transcription of several flagellar and non-flagellar operons by binding to their promoter region. Activates expression of class 2 flagellar genes, including fliA, which is a flagellum-specific sigma factor that turns on the class 3 genes. Also regulates genes whose products function in a variety of physiological pathways. This Paraburkholderia phymatum (strain DSM 17167 / CIP 108236 / LMG 21445 / STM815) (Burkholderia phymatum) protein is Flagellar transcriptional regulator FlhC.